Here is a 213-residue protein sequence, read N- to C-terminus: Probable nicotinate-nucleotide adenylyltransferase (213 aa).

Belongs to the NadD family.

It catalyses the reaction nicotinate beta-D-ribonucleotide + ATP + H(+) = deamido-NAD(+) + diphosphate. It functions in the pathway cofactor biosynthesis; NAD(+) biosynthesis; deamido-NAD(+) from nicotinate D-ribonucleotide: step 1/1. Its function is as follows. Catalyzes the reversible adenylation of nicotinate mononucleotide (NaMN) to nicotinic acid adenine dinucleotide (NaAD). The sequence is that of Probable nicotinate-nucleotide adenylyltransferase from Escherichia coli O139:H28 (strain E24377A / ETEC).